The primary structure comprises 343 residues: Phenylalanine--tRNA ligase alpha subunit (343 aa).

Glu256 is a Mg(2+) binding site.

The protein belongs to the class-II aminoacyl-tRNA synthetase family. Phe-tRNA synthetase alpha subunit type 1 subfamily. In terms of assembly, tetramer of two alpha and two beta subunits. Mg(2+) is required as a cofactor.

It localises to the cytoplasm. It carries out the reaction tRNA(Phe) + L-phenylalanine + ATP = L-phenylalanyl-tRNA(Phe) + AMP + diphosphate + H(+). In Prosthecochloris aestuarii (strain DSM 271 / SK 413), this protein is Phenylalanine--tRNA ligase alpha subunit.